The primary structure comprises 862 residues: Transcription initiation factor TFIID subunit 4B (862 aa).

The tract at residues 100 to 241 (NTTTIQFPAN…TPSNEPNLKA (142 aa)) is sufficient for interaction with ZNF628. Residues 219–237 (VTTLKPSSLGASSTPSNEP) are compositionally biased toward polar residues. The tract at residues 219–239 (VTTLKPSSLGASSTPSNEPNL) is disordered. Residues 256–353 (LENVKKCKNF…CVQQTSSDMV (98 aa)) enclose the TAFH domain. Residues 511 to 533 (PGPVLSQPAGIPQAVQVKQLVVQ) form a required for interaction with P65/RELA region. Residues 516–556 (SQPAGIPQAVQVKQLVVQQPSGGNEKQVTTISHSSTLTIQK) carry the Nuclear export signal motif. S595 is subject to Phosphoserine. The Histone-fold domain maps to 653 to 702 (PFLFIGALQKRILDIGKKHDITELNSDAVNLISQATQERLRGLLEKLTAI). A coiled-coil region spans residues 722–787 (TRSQLKFLEK…LAQIQHRDAN (66 aa)). Residues 830 to 862 (PRITRICLRDLIFCMEQEREMKYSRALYLALLK) form a required for interaction with TAF12 region.

It belongs to the TAF4 family. TFIID is composed of TATA binding protein (TBP) and a number of TBP-associated factors (TAFs). Heterodimerizes with TAF12/TFII20 via the C-terminal H2A-like histone-fold domain. This heterodimer forms a histone-like octamer with the TAF6/TAFII70-TAF9/TAFII31 heterodimer. Interacts with P65/RELA homodimers and P65/RELA-REL heterodimers. Interaction with POU2AF1, via its C-terminal activation domain, is required for octamer-dependent transcription. Interacts with ZNF628. Under stimulation by forskolin, Isoform 1 is phosphorylated by protein kinase A (PKA). In terms of tissue distribution, preferentially expressed in ovarian granulosa cells (at protein level). Highly expressed in B-cells.

The protein resides in the nucleus. It localises to the cytoplasm. Its function is as follows. Cell type-specific subunit of the general transcription factor TFIID that may function as a gene-selective coactivator in certain cells. TFIID is a multimeric protein complex that plays a central role in mediating promoter responses to various activators and repressors. TAF4B is a transcriptional coactivator of the p65/RELA NF-kappa-B subunit. Involved in the activation of a subset of antiapoptotic genes including TNFAIP3. May be involved in regulating folliculogenesis. Through interaction with OCBA/POU2AF1, acts as a coactivator of B-cell-specific transcription. Plays a role in spermiogenesis and oogenesis. The chain is Transcription initiation factor TFIID subunit 4B (TAF4B) from Homo sapiens (Human).